The chain runs to 80 residues: Small ribosomal subunit protein bS18 (80 aa).

This sequence belongs to the bacterial ribosomal protein bS18 family. In terms of assembly, part of the 30S ribosomal subunit. Forms a tight heterodimer with protein bS6.

Functionally, binds as a heterodimer with protein bS6 to the central domain of the 16S rRNA, where it helps stabilize the platform of the 30S subunit. In Staphylococcus aureus (strain Mu3 / ATCC 700698), this protein is Small ribosomal subunit protein bS18.